Reading from the N-terminus, the 528-residue chain is Glutamyl-tRNA(Gln) amidotransferase subunit A, mitochondrial (528 aa).

The active-site Charge relay system is K76. A disordered region spans residues 148–167 (YREKRKQNPHSENEDSDWLI). The Charge relay system role is filled by S171. Catalysis depends on S195, which acts as the Acyl-ester intermediate.

It belongs to the amidase family. GatA subfamily. In terms of assembly, subunit of the heterotrimeric GatCAB amidotransferase (AdT) complex, composed of A (QRSL1), B (GATB) and C (GATC) subunits.

It is found in the mitochondrion. It catalyses the reaction L-glutamyl-tRNA(Gln) + L-glutamine + ATP + H2O = L-glutaminyl-tRNA(Gln) + L-glutamate + ADP + phosphate + H(+). Functionally, allows the formation of correctly charged Gln-tRNA(Gln) through the transamidation of misacylated Glu-tRNA(Gln) in the mitochondria. The reaction takes place in the presence of glutamine and ATP through an activated gamma-phospho-Glu-tRNA(Gln). In Homo sapiens (Human), this protein is Glutamyl-tRNA(Gln) amidotransferase subunit A, mitochondrial.